Consider the following 419-residue polypeptide: Probable pectate lyase C (419 aa).

Residues methionine 1–alanine 19 form the signal peptide. N-linked (GlcNAc...) asparagine glycosylation is found at asparagine 48, asparagine 164, and asparagine 201. Residue arginine 204 is part of the active site. Residues asparagine 261–methionine 296 enclose the EF-hand domain. Ca(2+) contacts are provided by aspartate 274, aspartate 276, aspartate 278, and threonine 280. N-linked (GlcNAc...) asparagine glycosylation occurs at asparagine 282. Glutamate 285 is a binding site for Ca(2+). Residues isoleucine 352–serine 395 are disordered. A compositionally biased stretch (low complexity) spans aspartate 363–aspartate 372. Residues threonine 373–leucine 386 show a composition bias toward acidic residues.

Belongs to the polysaccharide lyase 1 family. Ca(2+) serves as cofactor.

It localises to the secreted. It carries out the reaction Eliminative cleavage of (1-&gt;4)-alpha-D-galacturonan to give oligosaccharides with 4-deoxy-alpha-D-galact-4-enuronosyl groups at their non-reducing ends.. Pectinolytic enzyme consist of four classes of enzymes: pectin lyase, polygalacturonase, pectin methylesterase and rhamnogalacturonase. Among pectinolytic enzymes, pectin lyase is the most important in depolymerization of pectin, since it cleaves internal glycosidic bonds of highly methylated pectins. Favors pectate, the anion, over pectin, the methyl ester. This chain is Probable pectate lyase C (plyC), found in Aspergillus oryzae (strain ATCC 42149 / RIB 40) (Yellow koji mold).